Consider the following 222-residue polypeptide: RNA chaperone ProQ (222 aa).

Over residues 94–113 (EHADHAKQQLDESKAKAAEK) the composition is skewed to basic and acidic residues. The interval 94–171 (EHADHAKQQL…PAKLTDSDLQ (78 aa)) is disordered. A compositionally biased stretch (basic residues) spans 114 to 131 (RKAKLAQQPKRKDKRQFN). Over residues 133–148 (PKGEKSANSDHADTKR) the composition is skewed to basic and acidic residues. A compositionally biased stretch (low complexity) spans 155 to 164 (NRPNTTPPAK).

The protein belongs to the ProQ family.

The protein localises to the cytoplasm. In terms of biological role, RNA chaperone with significant RNA binding, RNA strand exchange and RNA duplexing activities. The chain is RNA chaperone ProQ from Alteromonas mediterranea (strain DSM 17117 / CIP 110805 / LMG 28347 / Deep ecotype).